A 523-amino-acid chain; its full sequence is DNA-directed RNA polymerase subunit Rpo2N (523 aa).

Residues 501–523 are disordered; it reads SSMGVEGIPGISMETTSTTSADD. Polar residues predominate over residues 513-523; it reads METTSTTSADD.

This sequence belongs to the RNA polymerase beta chain family. As to quaternary structure, part of the RNA polymerase complex.

The protein localises to the cytoplasm. It catalyses the reaction RNA(n) + a ribonucleoside 5'-triphosphate = RNA(n+1) + diphosphate. Functionally, DNA-dependent RNA polymerase (RNAP) catalyzes the transcription of DNA into RNA using the four ribonucleoside triphosphates as substrates. The Rpo2 subunit (Rpo2N and Rpo2C in this organism) is implicated in DNA promoter recognition and in nucleotide binding. This chain is DNA-directed RNA polymerase subunit Rpo2N, found in Halobacterium salinarum (strain ATCC 29341 / DSM 671 / R1).